Here is a 107-residue protein sequence, read N- to C-terminus: Phosphoribosyl-ATP pyrophosphatase (107 aa).

This sequence belongs to the PRA-PH family.

It localises to the cytoplasm. It carries out the reaction 1-(5-phospho-beta-D-ribosyl)-ATP + H2O = 1-(5-phospho-beta-D-ribosyl)-5'-AMP + diphosphate + H(+). It functions in the pathway amino-acid biosynthesis; L-histidine biosynthesis; L-histidine from 5-phospho-alpha-D-ribose 1-diphosphate: step 2/9. The sequence is that of Phosphoribosyl-ATP pyrophosphatase from Novosphingobium aromaticivorans (strain ATCC 700278 / DSM 12444 / CCUG 56034 / CIP 105152 / NBRC 16084 / F199).